Reading from the N-terminus, the 121-residue chain is Small ribosomal subunit protein uS13 (121 aa).

The segment at 97–121 is disordered; sequence VRGQRTRTNARTRRGARKTVAGKKK. Residues 100–121 show a composition bias toward basic residues; sequence QRTRTNARTRRGARKTVAGKKK.

This sequence belongs to the universal ribosomal protein uS13 family. In terms of assembly, part of the 30S ribosomal subunit. Forms a loose heterodimer with protein S19. Forms two bridges to the 50S subunit in the 70S ribosome.

In terms of biological role, located at the top of the head of the 30S subunit, it contacts several helices of the 16S rRNA. In the 70S ribosome it contacts the 23S rRNA (bridge B1a) and protein L5 of the 50S subunit (bridge B1b), connecting the 2 subunits; these bridges are implicated in subunit movement. Contacts the tRNAs in the A and P-sites. This is Small ribosomal subunit protein uS13 from Synechococcus sp. (strain WH7803).